The chain runs to 310 residues: tRNA-cytidine(32) 2-sulfurtransferase (310 aa).

Positions 47–52 (SGGKDS) match the PP-loop motif motif. Cysteine 122, cysteine 125, and cysteine 213 together coordinate [4Fe-4S] cluster.

Belongs to the TtcA family. Homodimer. Mg(2+) is required as a cofactor. [4Fe-4S] cluster serves as cofactor.

The protein localises to the cytoplasm. It catalyses the reaction cytidine(32) in tRNA + S-sulfanyl-L-cysteinyl-[cysteine desulfurase] + AH2 + ATP = 2-thiocytidine(32) in tRNA + L-cysteinyl-[cysteine desulfurase] + A + AMP + diphosphate + H(+). Its pathway is tRNA modification. Catalyzes the ATP-dependent 2-thiolation of cytidine in position 32 of tRNA, to form 2-thiocytidine (s(2)C32). The sulfur atoms are provided by the cysteine/cysteine desulfurase (IscS) system. The sequence is that of tRNA-cytidine(32) 2-sulfurtransferase from Serratia proteamaculans (strain 568).